The chain runs to 398 residues: Mannitol-1-phosphate 5-dehydrogenase (398 aa).

NAD(+) is bound at residue 10 to 21 (AVHFGAGNIGRG). Residue Lys-221 is part of the active site.

It belongs to the mannitol dehydrogenase family. In terms of assembly, monomer.

It carries out the reaction D-mannitol 1-phosphate + NAD(+) = beta-D-fructose 6-phosphate + NADH + H(+). Catalyzes the NAD(H)-dependent interconversion of D-fructose 6-phosphate and D-mannitol 1-phosphate in the mannitol metabolic pathway. This Neurospora crassa (strain ATCC 24698 / 74-OR23-1A / CBS 708.71 / DSM 1257 / FGSC 987) protein is Mannitol-1-phosphate 5-dehydrogenase.